The chain runs to 132 residues: Acyl-CoA thioester hydrolase YciA (132 aa).

The 116-residue stretch at 8-123 folds into the HotDog ACOT-type domain; the sequence is PQGDLVLRTL…LFKYVAVDPE (116 aa).

This sequence belongs to the acyl coenzyme A hydrolase family.

Functionally, catalyzes the hydrolysis of the thioester bond in palmitoyl-CoA and malonyl-CoA. This is Acyl-CoA thioester hydrolase YciA (yciA) from Escherichia coli O6:H1 (strain CFT073 / ATCC 700928 / UPEC).